A 283-amino-acid chain; its full sequence is Thymidylate synthase (283 aa).

Arg-22 is a binding site for dUMP. Catalysis depends on Cys-160, which acts as the Nucleophile. Residues 180–183 (RSCD), Asn-191, and 221–223 (HIY) contribute to the dUMP site. Asp-183 lines the (6R)-5,10-methylene-5,6,7,8-tetrahydrofolate pocket. Position 282 (Ala-282) interacts with (6R)-5,10-methylene-5,6,7,8-tetrahydrofolate.

It belongs to the thymidylate synthase family. Bacterial-type ThyA subfamily. In terms of assembly, homodimer.

Its subcellular location is the cytoplasm. The catalysed reaction is dUMP + (6R)-5,10-methylene-5,6,7,8-tetrahydrofolate = 7,8-dihydrofolate + dTMP. It functions in the pathway pyrimidine metabolism; dTTP biosynthesis. Catalyzes the reductive methylation of 2'-deoxyuridine-5'-monophosphate (dUMP) to 2'-deoxythymidine-5'-monophosphate (dTMP) while utilizing 5,10-methylenetetrahydrofolate (mTHF) as the methyl donor and reductant in the reaction, yielding dihydrofolate (DHF) as a by-product. This enzymatic reaction provides an intracellular de novo source of dTMP, an essential precursor for DNA biosynthesis. This Shewanella frigidimarina (strain NCIMB 400) protein is Thymidylate synthase.